The following is a 434-amino-acid chain: Trigger factor (434 aa).

The PPIase FKBP-type domain maps to 161–246 (EDRATLDFTG…LKKVEVRELP (86 aa)).

This sequence belongs to the FKBP-type PPIase family. Tig subfamily.

Its subcellular location is the cytoplasm. It catalyses the reaction [protein]-peptidylproline (omega=180) = [protein]-peptidylproline (omega=0). In terms of biological role, involved in protein export. Acts as a chaperone by maintaining the newly synthesized protein in an open conformation. Functions as a peptidyl-prolyl cis-trans isomerase. The polypeptide is Trigger factor (Yersinia enterocolitica serotype O:8 / biotype 1B (strain NCTC 13174 / 8081)).